Consider the following 462-residue polypeptide: MSDETMPVEFLVSDKRLLKTIKVKLETNGLFVTPIYSDNDNKVIKSSIEDLNHPLAVEINNIAGVKARFHESGNLERSEGHLKHQSNSITEFTKSFLKDHGLANDKIFLSHLLDHLPLKYTIYPPVVLFNNSTVRSFNHPIWQKAFQLKLFDPNEYYRELLCFLSPGKPSKGTSLHPNNRLLTHLAINNPITEADVLRRPFNIQPLYGKLIDDSILDDNDNTLWENPSQEQLNSSIWCKVIQNGVTQIWSPVFTMFSRGNIKEKKRVLTTFPDICNNDVVDLYAGIGYFTFSYLTKGARTLFAFELNPWSVEGLKRGLKANGFNKSGNCHVFQESNEMCVQRLTEFLSQNPGFRLRIRHINLGLLPSSKQGWPLAIKLIYLQGASLEKVTMHIHENVHIDAIEDGSFEKNVIVELDAINESIALIRNRGIKLQFVRSKLERIKTFAPDIWHVCVDVDVIVST.

Residues S257, K264, and 305–306 (EL) each bind S-adenosyl-L-methionine.

This sequence belongs to the class I-like SAM-binding methyltransferase superfamily. TRM5/TYW2 family.

It localises to the cytoplasm. It carries out the reaction 4-demethylwyosine(37) in tRNA(Phe) + S-adenosyl-L-methionine = 4-demethyl-7-[(3S)-3-amino-3-carboxypropyl]wyosine(37) in tRNA(Phe) + S-methyl-5'-thioadenosine + H(+). It functions in the pathway tRNA modification; wybutosine-tRNA(Phe) biosynthesis. In terms of biological role, S-adenosyl-L-methionine-dependent transferase that acts as a component of the wybutosine biosynthesis pathway. Wybutosine is a hyper modified guanosine with a tricyclic base found at the 3'-position adjacent to the anticodon of eukaryotic phenylalanine tRNA. Catalyzes the transfer of the alpha-amino-alpha-carboxypropyl (acp) group from S-adenosyl-L-methionine to the C-7 position of 4-demethylwyosine (imG-14) to produce wybutosine-86. The sequence is that of tRNA wybutosine-synthesizing protein 2 (TRM12) from Saccharomyces cerevisiae (strain ATCC 204508 / S288c) (Baker's yeast).